The primary structure comprises 365 residues: Coxsackievirus and adenovirus receptor (365 aa).

Residues 1 to 19 (MALLLCFVLLCGVVDFARS) form the signal peptide. 2 consecutive Ig-like C2-type domains span residues 20-134 (LSIT…KKIH) and 141-228 (PSGA…LRLN). The Extracellular portion of the chain corresponds to 20–237 (LSITTPEEMI…NVVPPSNKAG (218 aa)). Disulfide bonds link Cys-41/Cys-120 and Cys-162/Cys-212. N-linked (GlcNAc...) asparagine glycans are attached at residues Asn-106 and Asn-201. The chain crosses the membrane as a helical span at residues 238-258 (LIAGAIIGTLLALALIGLIIF). 2 S-palmitoyl cysteine lipidation sites follow: Cys-259 and Cys-260. Residues 259 to 365 (CCRKKRREEK…PAQSKDGSIV (107 aa)) lie on the Cytoplasmic side of the membrane. A compositionally biased stretch (basic and acidic residues) spans 269–282 (YEKEVHHDIREDVP). The segment at 269–343 (YEKEVHHDIR…TLPPAKVAAP (75 aa)) is disordered. Polar residues predominate over residues 286 to 322 (SRTSTARSYIGSNHSSLGSMSPSNMEGYSKTQYNQVP). A phosphoserine mark is found at Ser-297, Ser-304, Ser-306, Ser-323, Ser-332, and Ser-363. A PDZ-binding motif is present at residues 360-365 (KDGSIV).

In terms of assembly, monomer. May form homodimer. Interacts with LNX, MAGI1, DLG4, PRKCABP, TJP1 and CTNNB1. Interacts with MPDZ; recruits MPDZ to intercellular contact sites. Interacts with JAML (homodimeric form). Secreted isoform 3, isoform 4 and isoform 5 can interact with the extracellular domain of the receptor. As to quaternary structure, (Microbial infection) Interacts with adenovirus subgroups A, C, D, E and F fiber proteins as well as coxsackievirus B1, B2, B3, B4, B5 and B6 capsid proteins. Post-translationally, N-glycosylated. In terms of processing, palmitoylated on Cys-259 and/or Cys-260; required for proper localization to the plasma membrane. Expressed in pancreas, brain, heart, small intestine, testis, prostate and at a lower level in liver and lung. Isoform 5 is ubiquitously expressed. Isoform 3 is expressed in heart, lung and pancreas. In skeletal muscle, isoform 1 is found at the neuromuscular junction and isoform 2 is found in blood vessels. In cardiac muscle, isoform 1 and isoform 2 are found at intercalated disks. In heart expressed in subendothelial layers of the vessel wall but not in the luminal endothelial surface. Expression is elevated in hearts with dilated cardiomyopathy.

Its subcellular location is the cell membrane. It localises to the basolateral cell membrane. The protein resides in the cell junction. The protein localises to the tight junction. It is found in the adherens junction. Its subcellular location is the secreted. In terms of biological role, component of the epithelial apical junction complex that may function as a homophilic cell adhesion molecule and is essential for tight junction integrity. Also involved in transepithelial migration of leukocytes through adhesive interactions with JAML a transmembrane protein of the plasma membrane of leukocytes. The interaction between both receptors also mediates the activation of gamma-delta T-cells, a subpopulation of T-cells residing in epithelia and involved in tissue homeostasis and repair. Upon epithelial CXADR-binding, JAML induces downstream cell signaling events in gamma-delta T-cells through PI3-kinase and MAP kinases. It results in proliferation and production of cytokines and growth factors by T-cells that in turn stimulate epithelial tissues repair. Its function is as follows. (Microbial infection) Acts as a receptor for adenovirus type C. (Microbial infection) Acts as a receptor for Coxsackievirus B1 to B6. The chain is Coxsackievirus and adenovirus receptor (CXADR) from Homo sapiens (Human).